Consider the following 384-residue polypeptide: Carbamoyl phosphate synthase small chain (384 aa).

The CPSase stretch occupies residues 1-195 (MLPVLPPALL…LGRGHGTLAD (195 aa)). L-glutamine is bound by residues S50, G247, and G249. One can recognise a Glutamine amidotransferase type-1 domain in the interval 199–384 (HVVAYDFGVK…RFVALMQERA (186 aa)). Residue C275 is the Nucleophile of the active site. L276, Q279, N317, G319, and F320 together coordinate L-glutamine. Active-site residues include H359 and E361.

Belongs to the CarA family. In terms of assembly, composed of two chains; the small (or glutamine) chain promotes the hydrolysis of glutamine to ammonia, which is used by the large (or ammonia) chain to synthesize carbamoyl phosphate. Tetramer of heterodimers (alpha,beta)4.

It catalyses the reaction hydrogencarbonate + L-glutamine + 2 ATP + H2O = carbamoyl phosphate + L-glutamate + 2 ADP + phosphate + 2 H(+). The enzyme catalyses L-glutamine + H2O = L-glutamate + NH4(+). It functions in the pathway amino-acid biosynthesis; L-arginine biosynthesis; carbamoyl phosphate from bicarbonate: step 1/1. It participates in pyrimidine metabolism; UMP biosynthesis via de novo pathway; (S)-dihydroorotate from bicarbonate: step 1/3. Functionally, small subunit of the glutamine-dependent carbamoyl phosphate synthetase (CPSase). CPSase catalyzes the formation of carbamoyl phosphate from the ammonia moiety of glutamine, carbonate, and phosphate donated by ATP, constituting the first step of 2 biosynthetic pathways, one leading to arginine and/or urea and the other to pyrimidine nucleotides. The small subunit (glutamine amidotransferase) binds and cleaves glutamine to supply the large subunit with the substrate ammonia. The sequence is that of Carbamoyl phosphate synthase small chain from Rubrivivax gelatinosus (strain NBRC 100245 / IL144).